Consider the following 100-residue polypeptide: Large ribosomal subunit protein bL21 (100 aa).

This sequence belongs to the bacterial ribosomal protein bL21 family. In terms of assembly, part of the 50S ribosomal subunit. Contacts protein L20.

Its function is as follows. This protein binds to 23S rRNA in the presence of protein L20. This Wolbachia pipientis wMel protein is Large ribosomal subunit protein bL21.